Consider the following 227-residue polypeptide: Cytochrome c oxidase subunit 2 (227 aa).

Over 1-14 (MAYPFQLGLQDATS) the chain is Mitochondrial intermembrane. The helical transmembrane segment at 15 to 45 (PIMEELTNFHDHTLMIVFLISTLVLYIISLM) threads the bilayer. Over 46–59 (LTTKLTHTSTMDAQ) the chain is Mitochondrial matrix. A helical transmembrane segment spans residues 60–87 (EVETIWTILPAVILILIALPSLRILYMM). The Mitochondrial intermembrane segment spans residues 88 to 227 (DEINNPVLTV…YFENWSASMI (140 aa)). Residues His-161, Cys-196, Glu-198, Cys-200, His-204, and Met-207 each contribute to the Cu cation site. A Mg(2+)-binding site is contributed by Glu-198. Phosphotyrosine is present on Tyr-218.

Belongs to the cytochrome c oxidase subunit 2 family. As to quaternary structure, component of the cytochrome c oxidase (complex IV, CIV), a multisubunit enzyme composed of 14 subunits. The complex is composed of a catalytic core of 3 subunits MT-CO1, MT-CO2 and MT-CO3, encoded in the mitochondrial DNA, and 11 supernumerary subunits COX4I, COX5A, COX5B, COX6A, COX6B, COX6C, COX7A, COX7B, COX7C, COX8 and NDUFA4, which are encoded in the nuclear genome. The complex exists as a monomer or a dimer and forms supercomplexes (SCs) in the inner mitochondrial membrane with NADH-ubiquinone oxidoreductase (complex I, CI) and ubiquinol-cytochrome c oxidoreductase (cytochrome b-c1 complex, complex III, CIII), resulting in different assemblies (supercomplex SCI(1)III(2)IV(1) and megacomplex MCI(2)III(2)IV(2)). Found in a complex with TMEM177, COA6, COX18, COX20, SCO1 and SCO2. Interacts with TMEM177 in a COX20-dependent manner. Interacts with COX20. Interacts with COX16. Requires Cu cation as cofactor.

It localises to the mitochondrion inner membrane. It catalyses the reaction 4 Fe(II)-[cytochrome c] + O2 + 8 H(+)(in) = 4 Fe(III)-[cytochrome c] + 2 H2O + 4 H(+)(out). In terms of biological role, component of the cytochrome c oxidase, the last enzyme in the mitochondrial electron transport chain which drives oxidative phosphorylation. The respiratory chain contains 3 multisubunit complexes succinate dehydrogenase (complex II, CII), ubiquinol-cytochrome c oxidoreductase (cytochrome b-c1 complex, complex III, CIII) and cytochrome c oxidase (complex IV, CIV), that cooperate to transfer electrons derived from NADH and succinate to molecular oxygen, creating an electrochemical gradient over the inner membrane that drives transmembrane transport and the ATP synthase. Cytochrome c oxidase is the component of the respiratory chain that catalyzes the reduction of oxygen to water. Electrons originating from reduced cytochrome c in the intermembrane space (IMS) are transferred via the dinuclear copper A center (CU(A)) of subunit 2 and heme A of subunit 1 to the active site in subunit 1, a binuclear center (BNC) formed by heme A3 and copper B (CU(B)). The BNC reduces molecular oxygen to 2 water molecules using 4 electrons from cytochrome c in the IMS and 4 protons from the mitochondrial matrix. This is Cytochrome c oxidase subunit 2 (MT-CO2) from Leopoldamys sabanus (Long-tailed giant rat).